Consider the following 106-residue polypeptide: MIPGEVITPETDIELNVGRETLKVVVANLGDRPIQVGSHFHFYEANDALQFDREVAKGFRLNIAAGTAIRFEPGQSREVELVALAGKREVYGFAGRVMGRLYENVD.

The protein belongs to the urease beta subunit family. As to quaternary structure, heterotrimer of UreA (gamma), UreB (beta) and UreC (alpha) subunits. Three heterotrimers associate to form the active enzyme.

Its subcellular location is the cytoplasm. It catalyses the reaction urea + 2 H2O + H(+) = hydrogencarbonate + 2 NH4(+). The protein operates within nitrogen metabolism; urea degradation; CO(2) and NH(3) from urea (urease route): step 1/1. In Acinetobacter baumannii (strain SDF), this protein is Urease subunit beta.